Here is a 346-residue protein sequence, read N- to C-terminus: Holliday junction branch migration complex subunit RuvB (346 aa).

The tract at residues 2–183 is large ATPase domain (RuvB-L); it reads TDDRIIGAGA…FGIVQRLEFY (182 aa). Residues isoleucine 22, arginine 23, glycine 64, lysine 67, threonine 68, threonine 69, 130-132, arginine 173, tyrosine 183, and arginine 220 each bind ATP; that span reads EDF. Threonine 68 serves as a coordination point for Mg(2+). Residues 184-254 form a small ATPAse domain (RuvB-S) region; the sequence is SVEELTRIVR…VAQAAMKMLK (71 aa). Residues 257–346 form a head domain (RuvB-H) region; that stretch reads PEGFDELDRR…DLFAEVPDVG (90 aa). DNA is bound by residues arginine 293, arginine 312, and arginine 317.

Belongs to the RuvB family. As to quaternary structure, homohexamer. Forms an RuvA(8)-RuvB(12)-Holliday junction (HJ) complex. HJ DNA is sandwiched between 2 RuvA tetramers; dsDNA enters through RuvA and exits via RuvB. An RuvB hexamer assembles on each DNA strand where it exits the tetramer. Each RuvB hexamer is contacted by two RuvA subunits (via domain III) on 2 adjacent RuvB subunits; this complex drives branch migration. In the full resolvosome a probable DNA-RuvA(4)-RuvB(12)-RuvC(2) complex forms which resolves the HJ.

Its subcellular location is the cytoplasm. The enzyme catalyses ATP + H2O = ADP + phosphate + H(+). Its function is as follows. The RuvA-RuvB-RuvC complex processes Holliday junction (HJ) DNA during genetic recombination and DNA repair, while the RuvA-RuvB complex plays an important role in the rescue of blocked DNA replication forks via replication fork reversal (RFR). RuvA specifically binds to HJ cruciform DNA, conferring on it an open structure. The RuvB hexamer acts as an ATP-dependent pump, pulling dsDNA into and through the RuvAB complex. RuvB forms 2 homohexamers on either side of HJ DNA bound by 1 or 2 RuvA tetramers; 4 subunits per hexamer contact DNA at a time. Coordinated motions by a converter formed by DNA-disengaged RuvB subunits stimulates ATP hydrolysis and nucleotide exchange. Immobilization of the converter enables RuvB to convert the ATP-contained energy into a lever motion, pulling 2 nucleotides of DNA out of the RuvA tetramer per ATP hydrolyzed, thus driving DNA branch migration. The RuvB motors rotate together with the DNA substrate, which together with the progressing nucleotide cycle form the mechanistic basis for DNA recombination by continuous HJ branch migration. Branch migration allows RuvC to scan DNA until it finds its consensus sequence, where it cleaves and resolves cruciform DNA. This is Holliday junction branch migration complex subunit RuvB from Stenotrophomonas maltophilia (strain R551-3).